Here is a 76-residue protein sequence, read N- to C-terminus: Acyl carrier protein (76 aa).

Residues Met1 to Lys74 enclose the Carrier domain. Position 34 is an O-(pantetheine 4'-phosphoryl)serine (Ser34).

Belongs to the acyl carrier protein (ACP) family. In terms of processing, 4'-phosphopantetheine is transferred from CoA to a specific serine of apo-ACP by AcpS. This modification is essential for activity because fatty acids are bound in thioester linkage to the sulfhydryl of the prosthetic group.

The protein localises to the cytoplasm. It participates in lipid metabolism; fatty acid biosynthesis. Functionally, carrier of the growing fatty acid chain in fatty acid biosynthesis. The polypeptide is Acyl carrier protein (Persephonella marina (strain DSM 14350 / EX-H1)).